Consider the following 272-residue polypeptide: Shikimate dehydrogenase (NADP(+)) (272 aa).

Shikimate is bound by residues 14 to 16 (SKS) and T61. The Proton acceptor role is filled by K65. E77 serves as a coordination point for NADP(+). Residues N86 and D102 each contribute to the shikimate site. NADP(+) contacts are provided by residues 126–130 (GAGGA), 149–154 (NRTVFR), and M213. Residue Y215 participates in shikimate binding. G237 lines the NADP(+) pocket.

This sequence belongs to the shikimate dehydrogenase family. In terms of assembly, homodimer.

The enzyme catalyses shikimate + NADP(+) = 3-dehydroshikimate + NADPH + H(+). The protein operates within metabolic intermediate biosynthesis; chorismate biosynthesis; chorismate from D-erythrose 4-phosphate and phosphoenolpyruvate: step 4/7. Its function is as follows. Involved in the biosynthesis of the chorismate, which leads to the biosynthesis of aromatic amino acids. Catalyzes the reversible NADPH linked reduction of 3-dehydroshikimate (DHSA) to yield shikimate (SA). This is Shikimate dehydrogenase (NADP(+)) from Escherichia coli O127:H6 (strain E2348/69 / EPEC).